The following is a 449-amino-acid chain: Exodeoxyribonuclease 7 large subunit (449 aa).

It belongs to the XseA family. Heterooligomer composed of large and small subunits.

The protein resides in the cytoplasm. It carries out the reaction Exonucleolytic cleavage in either 5'- to 3'- or 3'- to 5'-direction to yield nucleoside 5'-phosphates.. In terms of biological role, bidirectionally degrades single-stranded DNA into large acid-insoluble oligonucleotides, which are then degraded further into small acid-soluble oligonucleotides. The sequence is that of Exodeoxyribonuclease 7 large subunit from Lacticaseibacillus paracasei (strain ATCC 334 / BCRC 17002 / CCUG 31169 / CIP 107868 / KCTC 3260 / NRRL B-441) (Lactobacillus paracasei).